A 119-amino-acid chain; its full sequence is Membrane-anchored ubiquitin-fold protein 1 (119 aa).

A Ubiquitin-like domain is found at 9 to 75 (FEIKFRLPDG…LENNKTLSEC (67 aa)). Cys116 carries the cysteine methyl ester modification. Residue Cys116 is the site of S-farnesyl cysteine attachment. Residues 117-119 (SIM) constitute a propeptide, removed in mature form.

It is found in the cell membrane. Its function is as follows. May serve as docking site to facilitate the association of other proteins to the plasma membrane. The chain is Membrane-anchored ubiquitin-fold protein 1 (MUB1) from Oryza sativa subsp. japonica (Rice).